The primary structure comprises 160 residues: Crossover junction endodeoxyribonuclease RuvC (160 aa).

Residues aspartate 7, glutamate 73, and aspartate 145 contribute to the active site. 3 residues coordinate Mg(2+): aspartate 7, glutamate 73, and aspartate 145.

Belongs to the RuvC family. As to quaternary structure, homodimer which binds Holliday junction (HJ) DNA. The HJ becomes 2-fold symmetrical on binding to RuvC with unstacked arms; it has a different conformation from HJ DNA in complex with RuvA. In the full resolvosome a probable DNA-RuvA(4)-RuvB(12)-RuvC(2) complex forms which resolves the HJ. The cofactor is Mg(2+).

The protein localises to the cytoplasm. The enzyme catalyses Endonucleolytic cleavage at a junction such as a reciprocal single-stranded crossover between two homologous DNA duplexes (Holliday junction).. Functionally, the RuvA-RuvB-RuvC complex processes Holliday junction (HJ) DNA during genetic recombination and DNA repair. Endonuclease that resolves HJ intermediates. Cleaves cruciform DNA by making single-stranded nicks across the HJ at symmetrical positions within the homologous arms, yielding a 5'-phosphate and a 3'-hydroxyl group; requires a central core of homology in the junction. The consensus cleavage sequence is 5'-(A/T)TT(C/G)-3'. Cleavage occurs on the 3'-side of the TT dinucleotide at the point of strand exchange. HJ branch migration catalyzed by RuvA-RuvB allows RuvC to scan DNA until it finds its consensus sequence, where it cleaves and resolves the cruciform DNA. In Synechococcus sp. (strain CC9311), this protein is Crossover junction endodeoxyribonuclease RuvC.